Here is a 390-residue protein sequence, read N- to C-terminus: Anhydro-N-acetylmuramic acid kinase (390 aa).

9-16 (GTSLDGID) contributes to the ATP binding site.

This sequence belongs to the anhydro-N-acetylmuramic acid kinase family.

It catalyses the reaction 1,6-anhydro-N-acetyl-beta-muramate + ATP + H2O = N-acetyl-D-muramate 6-phosphate + ADP + H(+). It functions in the pathway amino-sugar metabolism; 1,6-anhydro-N-acetylmuramate degradation. Its pathway is cell wall biogenesis; peptidoglycan recycling. Catalyzes the specific phosphorylation of 1,6-anhydro-N-acetylmuramic acid (anhMurNAc) with the simultaneous cleavage of the 1,6-anhydro ring, generating MurNAc-6-P. Is required for the utilization of anhMurNAc either imported from the medium or derived from its own cell wall murein, and thus plays a role in cell wall recycling. In Bacillus cereus (strain ATCC 14579 / DSM 31 / CCUG 7414 / JCM 2152 / NBRC 15305 / NCIMB 9373 / NCTC 2599 / NRRL B-3711), this protein is Anhydro-N-acetylmuramic acid kinase.